The sequence spans 497 residues: Hexokinase-1 (497 aa).

Residues 4–24 traverse the membrane as a helical segment; it reads ATVGAAVIGAATVCAVAALIV. Positions 35-487 constitute a Hexokinase domain; sequence ARAMAILREF…SGIGAALLAA (453 aa). The hexokinase small subdomain stretch occupies residues 90–228; sequence TGDEAGVFYA…GVDMRVSALV (139 aa). The ADP site is built by G104, T105, and N106. D-glucose contacts are provided by T194, K195, N229, and D230. The tract at residues 229-476 is hexokinase large subdomain; it reads NDTVGTLAGG…TSIVFEHSND (248 aa). T253 contributes to the ADP binding site. Positions 256, 284, and 315 each coordinate D-glucose. ADP is bound at residue G441.

This sequence belongs to the hexokinase family.

It localises to the plastid. It is found in the chloroplast outer membrane. It carries out the reaction a D-hexose + ATP = a D-hexose 6-phosphate + ADP + H(+). The enzyme catalyses D-fructose + ATP = D-fructose 6-phosphate + ADP + H(+). It catalyses the reaction D-glucose + ATP = D-glucose 6-phosphate + ADP + H(+). The protein operates within carbohydrate metabolism; hexose metabolism. It participates in carbohydrate degradation; glycolysis; D-glyceraldehyde 3-phosphate and glycerone phosphate from D-glucose: step 1/4. Its function is as follows. Fructose and glucose phosphorylating enzyme. In Nicotiana tabacum (Common tobacco), this protein is Hexokinase-1 (HXK1).